The following is a 261-amino-acid chain: uncharacterized protein (261 aa).

This is an uncharacterized protein from Mycobacterium tuberculosis (strain CDC 1551 / Oshkosh).